The following is a 225-amino-acid chain: Large ribosomal subunit protein eL15 (225 aa).

The disordered stretch occupies residues 159–180; that stretch reads RPFRGLTSAGKKMRGLRKSRGL. Positions 169–180 are enriched in basic residues; sequence KKMRGLRKSRGL.

The protein belongs to the eukaryotic ribosomal protein eL15 family.

The protein is Large ribosomal subunit protein eL15 (rpl15e) of Aeropyrum pernix (strain ATCC 700893 / DSM 11879 / JCM 9820 / NBRC 100138 / K1).